The following is a 146-amino-acid chain: Allograft inflammatory factor 1 (146 aa).

An N-acetylserine modification is found at Ser-1. Residue Lys-10 is modified to N6-acetyllysine. At Ser-38 the chain carries Phosphoserine. One can recognise an EF-hand 1 domain in the interval 44–79 (RKLEAFKQKYMEFDLNGNGDIDIMSLKRMLEKLGVP). Residues Asp-57, Asn-59, Asn-61, Asp-63, and Thr-99 each contribute to the Ca(2+) site. The 35-residue stretch at 81 to 115 (THLELKKLIKEVSSGSGETFSYSIFLKMMLGKRSA) folds into the EF-hand 2; degenerate domain. The interval 127–146 (AREQEKPTGPPAKKAISELP) is disordered.

Homodimer (Potential). Monomer. Interacts with LCP1. Microglial cells in the central nervous system and dendritic cells and macrophages in several organs.

The protein resides in the cytoplasm. Its subcellular location is the cytoskeleton. It is found in the cell projection. It localises to the ruffle membrane. The protein localises to the phagocytic cup. Actin-binding protein that enhances membrane ruffling and RAC activation. Enhances the actin-bundling activity of LCP1. Binds calcium. Plays a role in RAC signaling and in phagocytosis. May play a role in macrophage activation and function. Promotes the proliferation of vascular smooth muscle cells and of T-lymphocytes. Enhances lymphocyte migration. Plays a role in vascular inflammation. Has a dual influence on glucose-induced insulin secretion: inhibition at low concentration and stimulation at high concentrations. This is Allograft inflammatory factor 1 (AIF1) from Sus scrofa (Pig).